Reading from the N-terminus, the 294-residue chain is Flagellin B1 (294 aa).

The propeptide occupies 1 to 8 (MKTRTRKG).

The protein belongs to the archaeal flagellin family.

The protein resides in the archaeal flagellum. Functionally, flagellin is the subunit protein which polymerizes to form the filaments of archaeal flagella. The chain is Flagellin B1 (flaB1) from Thermococcus kodakarensis (strain ATCC BAA-918 / JCM 12380 / KOD1) (Pyrococcus kodakaraensis (strain KOD1)).